Here is a 757-residue protein sequence, read N- to C-terminus: E3 ubiquitin-protein ligase SMURF1 (757 aa).

A C2 domain is found at 1–120 (MSNPGTRRNG…TGYQRLDLCK (120 aa)). The interval 193-237 (GNCRFVESPSQDQRLQAQRLRNPDVRGSLQTPQNRPHGHQSPELP) is disordered. S200 is modified (phosphoserine). 2 WW domains span residues 234–267 (PELPEGYEQRTTVQGQVYFLHTQTGVSTWHDPRI) and 306–339 (GPLPPGWEVRSTVSGRIYFVDHNNRTTQFTDPRL). Residues K381 and K383 each participate in a glycyl lysine isopeptide (Lys-Gly) (interchain with G-Cter in ubiquitin) cross-link. The HECT domain maps to 420-757 (RPKDLKKRLM…VEETCGFAVE (338 aa)). C725 acts as the Glycyl thioester intermediate in catalysis.

In terms of assembly, interacts with TRAF4. Interacts (via HECT domain) with FBXL15 (via LRR repeats). Interacts with SMAD7 and TGFBR1; SMAD7 recruits SMURF1 to TGFBR1 and regulates TGF-beta receptor degradation. Interacts with MAVS; the interaction is mediated by NDFIP1. In terms of processing, auto-ubiquitinated in presence of NDFIP1. Ubiquitinated by the SCF(FBXL15) complex at Lys-381 and Lys-383, leading to its degradation by the proteasome. Lys-383 is the primary ubiquitination site. In terms of tissue distribution, expressed in melanocytes.

The protein resides in the cytoplasm. It is found in the cell membrane. The catalysed reaction is S-ubiquitinyl-[E2 ubiquitin-conjugating enzyme]-L-cysteine + [acceptor protein]-L-lysine = [E2 ubiquitin-conjugating enzyme]-L-cysteine + N(6)-ubiquitinyl-[acceptor protein]-L-lysine.. Its pathway is protein modification; protein ubiquitination. Its function is as follows. E3 ubiquitin-protein ligase that acts as a negative regulator of BMP signaling pathway. Mediates ubiquitination and degradation of SMAD1 and SMAD5, 2 receptor-regulated SMADs specific for the BMP pathway. Promotes ubiquitination and subsequent proteasomal degradation of TRAF family members and RHOA. Promotes ubiquitination and subsequent proteasomal degradation of MAVS. Acts as an antagonist of TGF-beta signaling by ubiquitinating TGFBR1 and targeting it for degradation. Plays a role in dendrite formation by melanocytes. The protein is E3 ubiquitin-protein ligase SMURF1 (SMURF1) of Homo sapiens (Human).